The chain runs to 476 residues: Glycogen synthase (476 aa).

K15 contributes to the ADP-alpha-D-glucose binding site.

This sequence belongs to the glycosyltransferase 1 family. Bacterial/plant glycogen synthase subfamily.

It carries out the reaction [(1-&gt;4)-alpha-D-glucosyl](n) + ADP-alpha-D-glucose = [(1-&gt;4)-alpha-D-glucosyl](n+1) + ADP + H(+). It functions in the pathway glycan biosynthesis; glycogen biosynthesis. Functionally, synthesizes alpha-1,4-glucan chains using ADP-glucose. This chain is Glycogen synthase, found in Haemophilus influenzae (strain PittGG).